The following is a 391-amino-acid chain: Methylthioribose-1-phosphate isomerase (391 aa).

Aspartate 267 serves as the catalytic Proton donor.

Belongs to the eIF-2B alpha/beta/delta subunits family. MtnA subfamily.

The protein localises to the cytoplasm. It is found in the nucleus. It catalyses the reaction 5-(methylsulfanyl)-alpha-D-ribose 1-phosphate = 5-(methylsulfanyl)-D-ribulose 1-phosphate. Its pathway is amino-acid biosynthesis; L-methionine biosynthesis via salvage pathway; L-methionine from S-methyl-5-thio-alpha-D-ribose 1-phosphate: step 1/6. Functionally, catalyzes the interconversion of methylthioribose-1-phosphate (MTR-1-P) into methylthioribulose-1-phosphate (MTRu-1-P). The polypeptide is Methylthioribose-1-phosphate isomerase (Ajellomyces capsulatus (strain NAm1 / WU24) (Darling's disease fungus)).